A 1609-amino-acid chain; its full sequence is Probable outer membrane protein pmp21 (1609 aa).

An N-terminal signal peptide occupies residues 1-30 (MVAKKTVRSYRSSFSHSVIVAILSAGIAFE). Polar residues predominate over residues 132 to 145 (FSQPTQEPDTSNAV). Disordered regions lie at residues 132 to 183 (FSQP…KSPE) and 640 to 677 (TAPVESDASSTNKDEKSLNACSHGDHYPPKTVEEEVPP). Composition is skewed to basic and acidic residues over residues 149 to 175 (ISSDTKENRKDLETEDPSKKSGLKEVS) and 651 to 672 (NKDEKSLNACSHGDHYPPKTVE). Positions 1328 to 1609 (ELDFSTNVWG…DFNGGIRIIF (282 aa)) constitute an Autotransporter domain.

It belongs to the PMP outer membrane protein family.

The protein resides in the secreted. Its subcellular location is the cell wall. It is found in the cell outer membrane. In Chlamydia pneumoniae (Chlamydophila pneumoniae), this protein is Probable outer membrane protein pmp21 (pmp21).